The following is a 101-amino-acid chain: Small ribosomal subunit protein bS18c (101 aa).

This sequence belongs to the bacterial ribosomal protein bS18 family. Part of the 30S ribosomal subunit.

The protein resides in the plastid. It is found in the chloroplast. The polypeptide is Small ribosomal subunit protein bS18c (Panax ginseng (Korean ginseng)).